A 443-amino-acid polypeptide reads, in one-letter code: Serine/threonine-protein kinase 40 (443 aa).

Over residues 1–11 (MKRRASERDAG) the composition is skewed to basic and acidic residues. The segment at 1–26 (MKRRASERDAGETSARSKALCSSISG) is disordered. A compositionally biased stretch (polar residues) spans 14–26 (SARSKALCSSISG). The region spanning 35 to 332 (FILGPRLGNS…EVLESLGAII (298 aa)) is the Protein kinase domain. ATP contacts are provided by residues 41-49 (LGNSPVPSI) and lysine 66. Aspartate 197 functions as the Proton acceptor in the catalytic mechanism.

The protein belongs to the protein kinase superfamily. CAMK Ser/Thr protein kinase family.

It localises to the nucleus. The protein resides in the cytoplasm. It carries out the reaction L-seryl-[protein] + ATP = O-phospho-L-seryl-[protein] + ADP + H(+). The enzyme catalyses L-threonyl-[protein] + ATP = O-phospho-L-threonyl-[protein] + ADP + H(+). Functionally, may be a negative regulator of NF-kappa-B and p53-mediated gene transcription. This chain is Serine/threonine-protein kinase 40 (stk40), found in Xenopus tropicalis (Western clawed frog).